We begin with the raw amino-acid sequence, 797 residues long: Striatin-3 (797 aa).

Residue methionine 1 is modified to N-acetylmethionine. 2 stretches are compositionally biased toward gly residues: residues 1-13 (MDEL…GGPG) and 23-43 (GPGG…GGGP). The tract at residues 1–60 (MDELAGGGGGGPGMAAPPRQQQGPGGNLGLSPGGNGAAGGGGPPASEGAGPAAGPELSRP) is disordered. The span at 44–56 (PASEGAGPAAGPE) shows a compositional bias: low complexity. A caveolin-binding region spans residues 71–79 (YIQHEWARF). The stretch at 77–136 (ARFEMERAHWEVERAELQARIAFLQGERKGQENLKKDLVRRIKMLEYALKQERAKYHKLK) forms a coiled coil. Residue threonine 150 is modified to Phosphothreonine. The interval 166–183 (QNSQLTWKQGRQLLRQYL) is calmodulin-binding. Phosphoserine is present on residues serine 202, serine 214, and serine 229. 2 disordered regions span residues 224-278 (LNGG…KHRM) and 313-338 (DGEG…SPTA). Positions 230–241 (PKQKGQEIKRSS) are enriched in basic and acidic residues. A compositionally biased stretch (acidic residues) spans 253–265 (NADDSDEDEENDM). Residues serine 257 and serine 335 each carry the phosphoserine modification. WD repeat units follow at residues 478 to 517 (SHFD…PAKK), 531 to 570 (AHIG…VDPY), 584 to 623 (GHTD…PCIC), 679 to 718 (QSNN…MIHS), 721 to 760 (AHLD…CVQE), and 767 to 797 (KLDE…KVFV).

Belongs to the WD repeat striatin family. As to quaternary structure, tetramerizes. Part of the core of STRIPAK complexes composed of PP2A catalytic and scaffolding subunits, the striatins (PP2A regulatory subunits), the striatin-associated proteins MOB4, STRIP1 and STRIP2, PDCD10 and members of the STE20 kinases, such as STK24 and STK26. The STRIPAK complex can be extended by adapter proteins such as SLMAP:SIKE1 or CTTNBP2NL. Interacts with CDC42BPB.

Its subcellular location is the cytoplasm. It is found in the membrane. Calmodulin-binding scaffolding protein which is the center of the striatin-interacting phosphatase and kinase (STRIPAK) complexes. STRIPAK complexes have critical roles in protein (de)phosphorylation and are regulators of multiple signaling pathways including Hippo, MAPK, nuclear receptor and cytoskeleton remodeling. Different types of STRIPAK complexes are involved in a variety of biological processes such as cell growth, differentiation, apoptosis, metabolism and immune regulation. This chain is Striatin-3, found in Homo sapiens (Human).